Here is a 232-residue protein sequence, read N- to C-terminus: DASH complex subunit DUO1 (232 aa).

2 disordered regions span residues 1-44 (MADE…GGMR) and 133-232 (ERRR…RGAK). Residues 128–171 (ELEAEERRRQEEVERRAAEAERRREEARRKAEEEERRRAAAAAA) are a coiled coil. The segment covering 133 to 165 (ERRRQEEVERRAAEAERRREEARRKAEEEERRR) has biased composition (basic and acidic residues). 2 stretches are compositionally biased toward low complexity: residues 167 to 183 (AAAA…VGRG) and 191 to 213 (GSGL…TTSG).

Belongs to the DASH complex DUO1 family. As to quaternary structure, component of the DASH complex consisting of ASK1, DAD1, DAD2, DAD3, DAD4, DAM1, DUO1, HSK3, SPC19 and SPC34, with a stoichiometry of one copy of each subunit per complex. Multiple DASH complexes oligomerize to form a ring that encircles spindle microtubules and organizes the rod-like NDC80 complexes of the outer kinetochore. DASH complex oligomerization strengthens microtubule attachments. On cytoplasmic microtubules, DASH complexes appear to form patches instead of rings.

The protein localises to the nucleus. Its subcellular location is the cytoplasm. It is found in the cytoskeleton. It localises to the spindle pole. The protein resides in the chromosome. The protein localises to the centromere. Its subcellular location is the kinetochore. Its function is as follows. Component of the DASH complex that connects microtubules with kinetochores and couples microtubule depolymerisation to chromosome movement; it is involved in retrieving kinetochores to the spindle poles before their re-orientation on the spindle in early mitosis and allows microtubule depolymerization to pull chromosomes apart and resist detachment during anaphase. Kinetochores, consisting of a centromere-associated inner segment and a microtubule-contacting outer segment, play a crucial role in chromosome segregation by mediating the physical connection between centromeric DNA and microtubules. Kinetochores also serve as an input point for the spindle assembly checkpoint, which delays anaphase until all chromosomes have bioriented on the mitotic spindle. In Chaetomium thermophilum (strain DSM 1495 / CBS 144.50 / IMI 039719) (Thermochaetoides thermophila), this protein is DASH complex subunit DUO1.